The sequence spans 554 residues: HMG box-containing protein 4 (554 aa).

Disordered regions lie at residues 14-34 (RGMEDVGLAAGRSQREKKRSY), 47-368 (QVRK…SAYQ), and 418-468 (HKQN…SPAK). Over residues 117–127 (TSPQVDTSTTH) the composition is skewed to polar residues. The segment covering 221–230 (TGREETESRS) has biased composition (basic and acidic residues). Residues 242–255 (PRSGGTPDSASSTG) are compositionally biased toward polar residues. Residues 272-300 (MKKKKKSKKSKKKKDKHKDEKHRKHSKSK) show a composition bias toward basic residues. Over residues 317-335 (LPSPPPPTATTPTSPPSVP) the composition is skewed to pro residues. Over residues 342–358 (HAEEQLDKKKKKEDPEK) the composition is skewed to basic and acidic residues. Positions 360 to 428 (KKKNMSAYQV…KQNKAEATTV (69 aa)) form a DNA-binding region, HMG box. Over residues 434 to 466 (SSESAARSKGSSSGLPSPNKKSPTSVVSFSTSP) the composition is skewed to low complexity.

As to quaternary structure, interacts with nlk.2.

The protein localises to the nucleus. Its function is as follows. Negatively regulates Wnt/beta-catenin signaling during development. This is HMG box-containing protein 4 (hmgxb4) from Xenopus tropicalis (Western clawed frog).